The chain runs to 66 residues: Beta-toxin Cb1 (66 aa).

The 66-residue stretch at 1–66 (KEGYIVNHST…VWPLPKKTCN (66 aa)) folds into the LCN-type CS-alpha/beta domain. Disulfide bonds link C12-C65, C16-C41, C25-C46, and C29-C48.

This sequence belongs to the long (4 C-C) scorpion toxin superfamily. Sodium channel inhibitor family. Beta subfamily. As to expression, expressed by the venom gland.

The protein resides in the secreted. With respect to regulation, inhibited by human antibodies scFvs 10FG2 and LR. In terms of biological role, beta toxins bind voltage-independently at site-4 of sodium channels (Nav) and reduces peak current and shifts the voltage of activation toward more negative potentials thereby affecting sodium channel activation and promoting spontaneous and repetitive firing. Has an inhibitory effect on voltage-gated sodium channel hNav1.6/SCN8A, affecting both the activation and inactivation processes. This toxin is active against mammals and lethal to mice. The protein is Beta-toxin Cb1 of Centruroides baergi (Scorpion).